The sequence spans 195 residues: IMP cyclohydrolase (195 aa).

This sequence belongs to the archaeal IMP cyclohydrolase family.

The enzyme catalyses IMP + H2O = 5-formamido-1-(5-phospho-D-ribosyl)imidazole-4-carboxamide. Its pathway is purine metabolism; IMP biosynthesis via de novo pathway; IMP from 5-formamido-1-(5-phospho-D-ribosyl)imidazole-4-carboxamide: step 1/1. Functionally, catalyzes the cyclization of 5-formylamidoimidazole-4-carboxamide ribonucleotide to IMP. The protein is IMP cyclohydrolase of Haloquadratum walsbyi (strain DSM 16790 / HBSQ001).